A 566-amino-acid chain; its full sequence is Serine/threonine-protein kinase PknE (566 aa).

Residues 1–337 (MDGTAESREG…PLPRSARQPW (337 aa)) are Cytoplasmic-facing. Phosphoserine; by autocatalysis is present on Ser-7. At Thr-11 the chain carries Phosphothreonine; by autocatalysis. In terms of domain architecture, Protein kinase spans 16–275 (YRLRRLVGRG…DLSAAAHAAL (260 aa)). ATP-binding positions include 22 to 30 (VGRGGMGDV) and Lys-45. 2 positions are modified to phosphothreonine; by autocatalysis: Thr-50 and Thr-59. Asp-139 serves as the catalytic Proton acceptor. Phosphothreonine; by autocatalysis occurs at positions 170, 175, and 178. Positions 296 to 330 (PVPSTHPVSPGTRWPQPTPWAGGAPPWGPPSSPLP) are disordered. Residues 338 to 358 (LWVGVAVAVVVALAGGLGIAL) traverse the membrane as a helical segment. The Extracellular portion of the chain corresponds to 359–566 (AHPWRSSGPR…DPSWLARLIG (208 aa)).

The protein belongs to the protein kinase superfamily. Ser/Thr protein kinase family. Homodimer. Autophosphorylated on serine and threonine residues. Dephosphorylated by PstP.

It localises to the cell membrane. It catalyses the reaction L-seryl-[protein] + ATP = O-phospho-L-seryl-[protein] + ADP + H(+). It carries out the reaction L-threonyl-[protein] + ATP = O-phospho-L-threonyl-[protein] + ADP + H(+). Functionally, a serine/threonine-protein kinase, acts on HupB in vitro, modifying at least 2 Ser and 8 Thr residues. Important for bacterial survival in the host during infection. The sequence is that of Serine/threonine-protein kinase PknE from Mycobacterium tuberculosis (strain ATCC 25177 / H37Ra).